The sequence spans 369 residues: MKLNQFGAAIGLLATGALLSGCGSDNNAAVGSARTGPSSGQVSCGGKPTLKASGSTAQANAMTRFVNAFERSCPGQTLNYTANGSGAGVSEFNGNQTDFGGSDSPLSRKEYAAAEQRCGSQAWNLPVVFGPIAITYNVNGLSSLNLDGPTTAKIFNGSIASWNDPAIQALNTGVALPAEPIHVVFRNDESGTTDNFQRYLDVASNGEWGKGIGKTFKGGVGEGAKGNDGTSAAVKSTEGSITYNEWSFASARKLNTAKIATSADPEPIAISVDSVGKTISGATIIGEGNDLVLDTVSFYKPAQPGSYPIVLATYEIVCSKYPDAQVGRAVKAFLQSTIGGGQNGLGDNGYVPIPDSFKSRLSTAANAIA.

Residues 1–21 (MKLNQFGAAIGLLATGALLSG) form the signal peptide. Residue C22 is the site of N-palmitoyl cysteine attachment. A lipid anchor (S-diacylglycerol cysteine) is attached at C22. Residues 55–57 (STA), S85, D103, and 190–192 (SGT) contribute to the phosphate site.

This sequence belongs to the PstS family. The complex is composed of two ATP-binding proteins (PstB), two transmembrane proteins (PstC and PstA) and a solute-binding protein (PstS).

It localises to the cell membrane. In terms of biological role, part of the ABC transporter complex PstSACB involved in phosphate import. In Mycobacterium leprae (strain TN), this protein is Phosphate-binding protein PstS 3 (pstS2).